The primary structure comprises 439 residues: Ribulose bisphosphate carboxylase/oxygenase activase, chloroplastic (439 aa).

Residue 167 to 174 participates in ATP binding; sequence GGKGQGKS.

Belongs to the RuBisCO activase family.

It is found in the plastid. The protein resides in the chloroplast stroma. Functionally, activation of RuBisCO (ribulose-1,5-bisphosphate carboxylase/oxygenase; EC 4.1.1.39) involves the ATP-dependent carboxylation of the epsilon-amino group of lysine leading to a carbamate structure. The sequence is that of Ribulose bisphosphate carboxylase/oxygenase activase, chloroplastic (RCA) from Vigna radiata var. radiata (Mung bean).